A 46-amino-acid chain; its full sequence is KSCCPTTTARNIYNTCRFGGGSRPVCAKLSGCKIISGTKCDSGWNH.

3 disulfides stabilise this stretch: cysteine 3-cysteine 40, cysteine 4-cysteine 32, and cysteine 16-cysteine 26. Histidine 46 carries the post-translational modification Blocked carboxyl end (His).

It belongs to the plant thionin (TC 1.C.44) family.

The protein localises to the secreted. In terms of biological role, thionins are small plant proteins which are toxic to animal cells. They seem to exert their toxic effect at the level of the cell membrane. Their precise function is not known. This is Phoratoxin from Phoradendron leucarpum subsp. tomentosum (California mistletoe).